The sequence spans 217 residues: Probable transaldolase (217 aa).

K83 acts as the Schiff-base intermediate with substrate in catalysis.

The protein belongs to the transaldolase family. Type 3B subfamily.

The protein localises to the cytoplasm. It catalyses the reaction D-sedoheptulose 7-phosphate + D-glyceraldehyde 3-phosphate = D-erythrose 4-phosphate + beta-D-fructose 6-phosphate. It functions in the pathway carbohydrate degradation; pentose phosphate pathway; D-glyceraldehyde 3-phosphate and beta-D-fructose 6-phosphate from D-ribose 5-phosphate and D-xylulose 5-phosphate (non-oxidative stage): step 2/3. Transaldolase is important for the balance of metabolites in the pentose-phosphate pathway. The protein is Probable transaldolase of Hydrogenobaculum sp. (strain Y04AAS1).